Consider the following 451-residue polypeptide: Type 3 secretion system ATPase (451 aa).

184–189 (GGGKST) is a binding site for ATP.

It belongs to the ATPase alpha/beta chains family. T3SS ATPase subfamily. The core secretion machinery of the T3SS is composed of approximately 20 different proteins, including cytoplasmic components, a base, an export apparatus and a needle. This subunit is part of the cytosolic complex. Forms homohexamers.

The protein localises to the cytoplasm. It carries out the reaction ATP + H2O + cellular proteinSide 1 = ADP + phosphate + cellular proteinSide 2.. Its function is as follows. ATPase component of the type III secretion system (T3SS), also called injectisome, which is used to inject bacterial effector proteins into eukaryotic host cells. Acts as a molecular motor to provide the energy that is required for the export of proteins. Required for type III secretion apparatus (T3SA) formation, proper protein secretion, host cell invasion and virulence. May play a critical role in T3SS substrate recognition, disassembly of the effector/chaperone complex and unfolding of the effector in an ATP-dependent manner prior to secretion. This Sinorhizobium fredii (strain NBRC 101917 / NGR234) protein is Type 3 secretion system ATPase.